A 111-amino-acid polypeptide reads, in one-letter code: X antigen family member 2 (111 aa).

2 disordered regions span residues 1-61 (MSWR…AAEI) and 77-111 (KTGD…KSQV). Over residues 86–111 (TDVKGKILPKAEHFKMPEAGEGKSQV) the composition is skewed to basic and acidic residues.

The protein belongs to the GAGE family.

The polypeptide is X antigen family member 2 (XAGE2) (Homo sapiens (Human)).